A 359-amino-acid chain; its full sequence is UPF0283 membrane protein Rleg2_1967 (359 aa).

A disordered region spans residues 1–43; it reads MSKPPSDPPRRPPAAFTYEDEATERHDNGRQAERRRKPESFSE. Residues 23 to 40 are compositionally biased toward basic and acidic residues; it reads TERHDNGRQAERRRKPES. The next 2 helical transmembrane spans lie at 77 to 97 and 111 to 131; these read FGKIAAGAFGILLSLGIGLWT and LGYLALAVLAVGVLAVLALVI.

This sequence belongs to the UPF0283 family.

It is found in the cell inner membrane. This Rhizobium leguminosarum bv. trifolii (strain WSM2304) protein is UPF0283 membrane protein Rleg2_1967.